The primary structure comprises 584 residues: N(6)-adenosine-methyltransferase subunit METTL3 (584 aa).

Disordered stretches follow at residues 1 to 65 (MSDT…EHPP) and 162 to 221 (KADD…SNKV). A compositionally biased stretch (polar residues) spans 187 to 204 (RKSSVSLATASISQLTAS). Positions 213 to 220 (DKKGRSNK) match the Nuclear localization signal motif. Residues 381–382 (DI) and aspartate 399 each bind S-adenosyl-L-methionine. Residues 400 to 414 (PPWDIHMELPYGTLT) are gate loop 1. Interaction with METTL14 stretches follow at residues 454–458 (DRVDE) and 468–484 (QRII…NHGK). Residues 466–483 (QLQRIIRTGRTGHWLNHG) are interphase loop. Residues 469 to 482 (RIIRTGRTGHWLNH) are positively charged region required for RNA-binding. The segment at 511-519 (VRSTSHKPD) is gate loop 2. S-adenosyl-L-methionine-binding positions include lysine 517, 540-543 (RPHN), and 553-554 (NQ).

The protein belongs to the MT-A70-like family. As to quaternary structure, heterodimer; heterodimerizes with mettl14 to form an antiparallel heterodimer that constitutes an active methyltransferase. Component of the WMM complex, a N6-methyltransferase complex composed of a catalytic subcomplex, named MAC, and of an associated subcomplex, named MACOM. The MAC subcomplex is composed of mettl3 and mettl14. In terms of tissue distribution, expressed in the hemato-vascular system: enriched in sorted endothelial cells and haemogenic endothelium.

Its subcellular location is the nucleus. It localises to the nucleus speckle. The protein resides in the cytoplasm. It catalyses the reaction an adenosine in mRNA + S-adenosyl-L-methionine = an N(6)-methyladenosine in mRNA + S-adenosyl-L-homocysteine + H(+). Functionally, the METTL3-METTL14 heterodimer forms a N6-methyltransferase complex that methylates adenosine residues at the N(6) position of some RNAs and regulates various processes such as the circadian clock, differentiation of embryonic and hematopoietic stem cells, cortical neurogenesis, response to DNA damage, differentiation of T-cells and primary miRNA processing. In the heterodimer formed with mettl14, mettl3 constitutes the catalytic core. N6-methyladenosine (m6A), which takes place at the 5'-[AG]GAC-3' consensus sites of some mRNAs, plays a role in mRNA stability, processing and translation efficiency. M6A is also involved in hematopoietic stem cells specification: m6A methylation and subsequent destabilization of mRNAs, such as notch1a, leads to decreased Notch signaling, promoting endothelial to hematopoietic transition. M6A also takes place in other RNA molecules, such as primary miRNA (pri-miRNAs). Mediates methylation of pri-miRNAs. The polypeptide is N(6)-adenosine-methyltransferase subunit METTL3 (Danio rerio (Zebrafish)).